The chain runs to 271 residues: Oxamate carbamoyltransferase subunit AllH (271 aa).

This sequence belongs to the AllH family. The OXTCase is composed of 3 subunits, AllF, AllG and AllH. Requires Mg(2+) as cofactor.

It catalyses the reaction oxamate + carbamoyl phosphate = N-carbamoyl-2-oxoglycine + phosphate. Its pathway is nitrogen metabolism; (S)-allantoin degradation. In terms of biological role, component of a carbamoyltransferase involved in the anaerobic nitrogen utilization via the assimilation of allantoin. Catalyzes the conversion of oxalurate (N-carbamoyl-2-oxoglycine) to oxamate and carbamoyl phosphate. The polypeptide is Oxamate carbamoyltransferase subunit AllH (Escherichia coli O157:H7).